Reading from the N-terminus, the 232-residue chain is uncharacterized protein (232 aa).

A signal peptide spans 1–18 (MGILKSLFTLGKSFISQA). The interval 207–232 (AEAGIGGSNKSSAQDVLARLQRQQGE) is disordered.

It belongs to the PspA/Vipp/IM30 family.

This is an uncharacterized protein from Escherichia coli O6:H1 (strain CFT073 / ATCC 700928 / UPEC).